We begin with the raw amino-acid sequence, 334 residues long: tRNA dimethylallyltransferase (334 aa).

23 to 30 (GPTGAGKT) contacts ATP. 25 to 30 (TGAGKT) contacts substrate. Interaction with substrate tRNA regions lie at residues 53–56 (DSAL) and 177–181 (QRVQR).

It belongs to the IPP transferase family. As to quaternary structure, monomer. Mg(2+) is required as a cofactor.

The catalysed reaction is adenosine(37) in tRNA + dimethylallyl diphosphate = N(6)-dimethylallyladenosine(37) in tRNA + diphosphate. Its function is as follows. Catalyzes the transfer of a dimethylallyl group onto the adenine at position 37 in tRNAs that read codons beginning with uridine, leading to the formation of N6-(dimethylallyl)adenosine (i(6)A). This is tRNA dimethylallyltransferase from Polynucleobacter necessarius subsp. necessarius (strain STIR1).